Here is a 356-residue protein sequence, read N- to C-terminus: Stomatin-like protein 2, mitochondrial (356 aa).

A mitochondrion-targeting transit peptide spans 1–28; sequence MLARAARGTGALLLKGSVQASARAPRRA. Phosphoserine; by PKC/PRKCZ is present on Ser-17. Position 124 is a phosphotyrosine (Tyr-124). N6-acetyllysine; alternate is present on Lys-145. N6-succinyllysine; alternate is present on Lys-145. Residues 215–252 are a coiled coil; that stretch reads INVAEGKKQAQILASEAEKAEQINQAAGEASAVLAKAK. Lys-233 is modified (N6-acetyllysine). Positions 326-356 are disordered; that stretch reads EAQDSVSSRSSRDVRSTDASLDEELDRVKLS. At Ser-330 the chain carries Phosphoserine.

The protein belongs to the band 7/mec-2 family. In terms of assembly, forms homooligomers. Interacts with MFN2; may form heterooligomers with this mediator of mitochondrial fusion. Interacts with PHB1 and PHB2; stabilizes and recruits them to cardiolipin-enriched mitochondrial membranes. Interacts with CACNA2D2.

The protein localises to the cell membrane. It is found in the mitochondrion. It localises to the mitochondrion inner membrane. The protein resides in the mitochondrion intermembrane space. Its subcellular location is the membrane raft. The protein localises to the cytoplasm. It is found in the cytoskeleton. Its function is as follows. Mitochondrial protein that probably regulates the biogenesis and the activity of mitochondria. Stimulates cardiolipin biosynthesis, binds cardiolipin-enriched membranes where it recruits and stabilizes some proteins including prohibitin and may therefore act in the organization of functional microdomains in mitochondrial membranes. Through regulation of the mitochondrial function may play a role into several biological processes including cell migration, cell proliferation, T-cell activation, calcium homeostasis and cellular response to stress. May play a role in calcium homeostasis through negative regulation of calcium efflux from mitochondria. Required for mitochondrial hyperfusion a pro-survival cellular response to stress which results in increased ATP production by mitochondria. May also regulate the organization of functional domains at the plasma membrane and play a role in T-cell activation through association with the T-cell receptor signaling complex and its regulation. The polypeptide is Stomatin-like protein 2, mitochondrial (STOML2) (Bos taurus (Bovine)).